A 196-amino-acid polypeptide reads, in one-letter code: Transmembrane 4 L6 family member 5 (196 aa).

Residues 1 to 9 (MCTGKCARF) lie on the Cytoplasmic side of the membrane. A helical transmembrane segment spans residues 10–30 (VGLSLIPLSLVCIVANALLLV). The Extracellular segment spans residues 31 to 45 (PNGQTTWTKDHLSLQ). Residues 46–66 (VWLMAGFVGGGLMVLCPGISA) form a helical membrane-spanning segment. Topologically, residues 67-89 (VRAGGKGCCGAGCCGNRCRMLRS) are cytoplasmic. A helical transmembrane segment spans residues 90–110 (VFCSAIGLLGAIYCLSVSGTG). An interaction with MTOR and CASTOR1 region spans residues 90-196 (VFCSAIGLLG…DCRKKQGSSQ (107 aa)). The Extracellular portion of the chain corresponds to 111 to 156 (LRIGPQCLMNGSWDYHFQDTAGSYLLNRTQWNLCVEPPDVVLWNVT). N-linked (GlcNAc...) asparagine glycosylation is present at Asn120. 123 to 128 (WDYHFQ) contributes to the L-arginine binding site. Asn137 and Asn154 each carry an N-linked (GlcNAc...) asparagine glycan. A helical transmembrane segment spans residues 157 to 177 (LFSLLVAASCLEILLCGVQLV). Residues 178-196 (NASIGVLCGDCRKKQGSSQ) are Cytoplasmic-facing.

Belongs to the L6 tetraspanin family. In terms of assembly, interacts with MTOR; the interaction is positively regulated by arginine and is negatively regulated by leucine. Interacts with SLC38A9. Interacts with SLC7A1; the interaction is negatively regulated by arginine. Interacts with CASTOR1; the interaction is positively regulated by leucine and is negatively regulated by arginine.

It is found in the lysosome membrane. The protein localises to the cell membrane. Its function is as follows. Acts as a lysosomal membrane arginine sensor. Forms a complex with MTOR and SLC38A9 on lysosomal membranes in an arginine-regulated manner, leading to arginine efflux which enables the activation of mTORC1 which subsequently leads to RPS6KB1 and EIF4EBP1 phosphorylations. Facilitates cell cycle G1/S phase progression and the translocation of the CDK4-CCND1 complex into the nucleus. CDKN1B and RHOA/ROCK signaling activity are involved in TM4SF5-mediated acceleration of G1/S phase progression. The protein is Transmembrane 4 L6 family member 5 (TM4SF5) of Bos taurus (Bovine).